A 343-amino-acid chain; its full sequence is GTP 3',8-cyclase (343 aa).

The 226-residue stretch at 19–244 folds into the Radical SAM core domain; it reads PYGRTISYLR…TDVDDSTGGP (226 aa). Arginine 28 provides a ligand contact to GTP. The [4Fe-4S] cluster site is built by cysteine 35 and cysteine 39. An S-adenosyl-L-methionine-binding site is contributed by tyrosine 41. Residue cysteine 42 coordinates [4Fe-4S] cluster. Arginine 77 serves as a coordination point for GTP. Glycine 81 lines the S-adenosyl-L-methionine pocket. Threonine 111 lines the GTP pocket. An S-adenosyl-L-methionine-binding site is contributed by serine 135. Lysine 171 contacts GTP. Methionine 205 contributes to the S-adenosyl-L-methionine binding site. [4Fe-4S] cluster is bound by residues cysteine 268 and cysteine 271. Residue 273 to 275 participates in GTP binding; that stretch reads RVR. Residue cysteine 285 participates in [4Fe-4S] cluster binding.

Belongs to the radical SAM superfamily. MoaA family. As to quaternary structure, monomer and homodimer. The cofactor is [4Fe-4S] cluster.

It catalyses the reaction GTP + AH2 + S-adenosyl-L-methionine = (8S)-3',8-cyclo-7,8-dihydroguanosine 5'-triphosphate + 5'-deoxyadenosine + L-methionine + A + H(+). Its pathway is cofactor biosynthesis; molybdopterin biosynthesis. Catalyzes the cyclization of GTP to (8S)-3',8-cyclo-7,8-dihydroguanosine 5'-triphosphate. This Nitrobacter hamburgensis (strain DSM 10229 / NCIMB 13809 / X14) protein is GTP 3',8-cyclase.